The chain runs to 397 residues: Carbamoyl phosphate synthase small chain (397 aa).

Positions 1–204 (MKHVLRKEKT…NAKLKEKIWH (204 aa)) are CPSase. L-glutamine contacts are provided by serine 57, glycine 252, and glycine 254. The region spanning 204–391 (HVVVYDFGVK…IKLMKKSYNS (188 aa)) is the Glutamine amidotransferase type-1 domain. The Nucleophile role is filled by cysteine 280. The L-glutamine site is built by leucine 281, glutamine 284, asparagine 322, and tyrosine 325. Catalysis depends on residues histidine 364 and glutamate 366.

The protein belongs to the CarA family. In terms of assembly, composed of two chains; the small (or glutamine) chain promotes the hydrolysis of glutamine to ammonia, which is used by the large (or ammonia) chain to synthesize carbamoyl phosphate. Tetramer of heterodimers (alpha,beta)4.

The enzyme catalyses hydrogencarbonate + L-glutamine + 2 ATP + H2O = carbamoyl phosphate + L-glutamate + 2 ADP + phosphate + 2 H(+). It catalyses the reaction L-glutamine + H2O = L-glutamate + NH4(+). Its pathway is amino-acid biosynthesis; L-arginine biosynthesis; carbamoyl phosphate from bicarbonate: step 1/1. It participates in pyrimidine metabolism; UMP biosynthesis via de novo pathway; (S)-dihydroorotate from bicarbonate: step 1/3. In terms of biological role, small subunit of the glutamine-dependent carbamoyl phosphate synthetase (CPSase). CPSase catalyzes the formation of carbamoyl phosphate from the ammonia moiety of glutamine, carbonate, and phosphate donated by ATP, constituting the first step of 2 biosynthetic pathways, one leading to arginine and/or urea and the other to pyrimidine nucleotides. The small subunit (glutamine amidotransferase) binds and cleaves glutamine to supply the large subunit with the substrate ammonia. The sequence is that of Carbamoyl phosphate synthase small chain from Buchnera aphidicola subsp. Baizongia pistaciae (strain Bp).